Here is a 373-residue protein sequence, read N- to C-terminus: Asporin (373 aa).

The signal sequence occupies residues M1 to A15. A propeptide spanning residues K16 to K32 is cleaved from the precursor. O-linked (GalNAc...) serine glycosylation occurs at S48. An LRRNT domain is found at F59 to F95. 2 disulfide bridges follow: C68-C74 and C72-C81. 11 LRR repeats span residues D96–G117, S120–T141, K144–L166, A167–G186, A189–G212, T235–K255, E259–N280, R283–K305, Y306–P327, T328–Y349, and W350–K373. The interaction with TGFB1 stretch occupies residues P159–I205. N275 carries N-linked (GlcNAc...) asparagine glycosylation. C326 and C359 are oxidised to a cystine.

This sequence belongs to the small leucine-rich proteoglycan (SLRP) family. SLRP class I subfamily. As to quaternary structure, interacts with type I collagen. DCN can inhibit collagen binding. Interacts with TGFB1, TGFB2 and TGFB3. DCN, BGN, and FMOD inhibit binding to TGFB1. Interacts with BMP2. Interacts in vitro with type II collagen. Higher expression in heart, also detected in kidney, stomach, testes, and skin but only weakly in lung, skeletal muscle, small intestine, and thymus. Expressed specifically and predominantly in the periodontal ligament (PDL). During tooth development, strong expression is seen in the dental follicle, which is the progenitor tissue that forms cementum, alveolar bone, and the PDL. Expressed in the perichondria of the maxilla, mandible, vertebrae, and long bones. Predominantly expressed in the perichondrium/periosteum of long bones (at protein level).

Its subcellular location is the secreted. It localises to the extracellular space. The protein localises to the extracellular matrix. Functionally, binds calcium and plays a role in osteoblast-driven collagen biomineralization activity. Critical regulator of TGF-beta in articular cartilage and plays an essential role in cartilage homeostasis and osteoarthritis (OA) pathogenesis. Negatively regulates chondrogenesis in the articular cartilage by blocking the TGF-beta/receptor interaction on the cell surface and inhibiting the canonical TGF-beta/Smad signal. Negatively regulates periodontal ligament (PDL) differentiation and mineralization to ensure that the PDL is not ossified and to maintain homeostasis of the tooth-supporting system. Inhibits BMP2-induced cytodifferentiation of PDL cells by preventing its binding to BMPR1B/BMP type-1B receptor, resulting in inhibition of BMP-dependent activation of SMAD proteins. Inhibits the interaction between TGFB1 and TGF-beta receptor type II in the presence of heparin/heparan sulfate in vitro. This is Asporin (Aspn) from Mus musculus (Mouse).